Consider the following 303-residue polypeptide: Probable cell division protein WhiA (303 aa).

The H-T-H motif DNA-binding region spans 272 to 303 (SIQQIADSLAVPLTKSGVNHRLRKINKIAEDL).

The protein belongs to the WhiA family.

Its function is as follows. Involved in cell division and chromosome segregation. The polypeptide is Probable cell division protein WhiA (Streptococcus mutans serotype c (strain ATCC 700610 / UA159)).